The following is a 494-amino-acid chain: Tripartite motif-containing protein 5 (494 aa).

N-acetylalanine is present on alanine 2. The RING-type zinc finger occupies 15 to 59 (CPICLELLTQPLSLDCGHSFCQACLTANHKTSMPDEGERSCPVCR). Serine 86 carries the post-translational modification Phosphoserine. Residues 91-133 (QKVDHCARHGEKLLLFCREDRKVICWLCERSQEHRGHHTFLTE) form a B box-type zinc finger. The Zn(2+) site is built by cysteine 96, histidine 99, cysteine 118, and histidine 124. Positions 132–241 (TEEVAQEYQV…LISDLEHRLQ (110 aa)) form a coiled coil. Positions 186–199 (FEQLRHILDWVESN) are required for interaction with GABARAP and for autophagy. In terms of domain architecture, B30.2/SPRY spans 282–494 (LKVMLKKLRE…VPMTLCSPSS (213 aa)).

The protein belongs to the TRIM/RBCC family. In terms of assembly, can form homodimers and homotrimers. In addition to lower-order dimerization, also exhibits a higher-order multimerization and both low- and high-order multimerizations are essential for its restriction activity. Interacts with BTBD1 and BTBD2. Interacts with PSMC4, PSMC5, PSMD7 and HSPA8/HSC70. Interacts (via B30.2/SPRY domain) with HSPA1A/B. Interacts with PSMC2, MAP3K7/TAK1, TAB2 and TAB3. Interacts with SQSTM1. Interacts with TRIM6 and TRIM34. Interacts with ULK1 (phosphorylated form), GABARAP, GABARAPL1, GABARAPL2, MAP1LC3A, MAP1LC3C and BECN1. Degraded in a proteasome-independent fashion in the absence of viral infection but in a proteasome-dependent fashion following exposure to restriction sensitive virus. Post-translationally, autoubiquitinated in a RING finger- and UBE2D2-dependent manner. Monoubiquitinated by TRIM21. Deubiquitinated by Yersinia YopJ. Ubiquitination may not lead to proteasomal degradation.

Its subcellular location is the cytoplasm. It localises to the nucleus. It carries out the reaction S-ubiquitinyl-[E2 ubiquitin-conjugating enzyme]-L-cysteine + [acceptor protein]-L-lysine = [E2 ubiquitin-conjugating enzyme]-L-cysteine + N(6)-ubiquitinyl-[acceptor protein]-L-lysine.. It functions in the pathway protein modification; protein ubiquitination. Functionally, capsid-specific restriction factor that prevents infection from non-host-adapted retroviruses. Blocks viral replication early in the life cycle, after viral entry but before reverse transcription. In addition to acting as a capsid-specific restriction factor, also acts as a pattern recognition receptor that activates innate immune signaling in response to the retroviral capsid lattice. Binding to the viral capsid triggers its E3 ubiquitin ligase activity, and in concert with the heterodimeric ubiquitin conjugating enzyme complex UBE2V1-UBE2N (also known as UBC13-UEV1A complex) generates 'Lys-63'-linked polyubiquitin chains, which in turn are catalysts in the autophosphorylation of the MAP3K7/TAK1 complex (includes TAK1, TAB2, and TAB3). Activation of the MAP3K7/TAK1 complex by autophosphorylation results in the induction and expression of NF-kappa-B and MAPK-responsive inflammatory genes, thereby leading to an innate immune response in the infected cell. Plays a role in regulating autophagy through activation of autophagy regulator BECN1 by causing its dissociation from its inhibitors BCL2 and TAB2. The chain is Tripartite motif-containing protein 5 (TRIM5) from Nomascus leucogenys (Northern white-cheeked gibbon).